The sequence spans 132 residues: Fatty acid-binding protein, brain (132 aa).

An N-acetylvaline modification is found at Val-2. 127–129 contributes to the a fatty acid binding site; it reads RCY.

Belongs to the calycin superfamily. Fatty-acid binding protein (FABP) family. In terms of tissue distribution, expressed in brain and other neural tissues.

Its subcellular location is the cytoplasm. B-FABP could be involved in the transport of a so far unknown hydrophobic ligand with potential morphogenic activity during CNS development. It is required for the establishment of the radial glial fiber system in developing brain, a system that is necessary for the migration of immature neurons to establish cortical layers. This is Fatty acid-binding protein, brain (Fabp7) from Mus musculus (Mouse).